The chain runs to 348 residues: Protein arginine N-methyltransferase 1 (348 aa).

The SAM-dependent MTase PRMT-type domain occupies 24 to 342 (KDYYFDSYAH…KGEVCDLNEQ (319 aa)). S-adenosyl-L-methionine is bound by residues histidine 37, arginine 46, glycine 70, glutamate 92, and glutamate 121. Active-site residues include glutamate 139 and glutamate 148.

It belongs to the class I-like SAM-binding methyltransferase superfamily. Protein arginine N-methyltransferase family. Interacts with daf-16. Interacts with pgl-1 and pgl-3. Interacts with alg-1. As to expression, widely expressed in pharyngeal, body wall muscle, intestinal and vulval cells.

The protein resides in the cytoplasm. Its subcellular location is the nucleus. It carries out the reaction L-arginyl-[protein] + 2 S-adenosyl-L-methionine = N(omega),N(omega)-dimethyl-L-arginyl-[protein] + 2 S-adenosyl-L-homocysteine + 2 H(+). The enzyme catalyses L-arginyl-[protein] + S-adenosyl-L-methionine = N(omega)-methyl-L-arginyl-[protein] + S-adenosyl-L-homocysteine + H(+). Its function is as follows. Arginine methyltransferase that methylates (mono and asymmetric dimethylation) the guanidino nitrogens of arginyl residues present in target proteins. Catalyzes the formation of monomethylarginine and asymmetric dimethylarginine on histones H2A and H4, a specific tag for epigenetic transcriptional activation. Catalyzes asymmetric arginine dimethylation of mitochondrial proteins necessary for mitochondrial oxidative phosphorylation activity and thus aerobic respiration and ATP synthesis, and the mitochondrial stress response. Methylates arginine residues in P-granule components pgl-1 and pgl-3 to promote P-granule degradation by autophagy in somatic cells to ensure exclusive localization of the P-granules in germ cells. Modulates the interaction of P-granule proteins epg-2 and sepa-1. Methylates arginine residues in daf-16, which blocks ftt-2 binding to daf-16, prevents akt-mediated phosphorylation and allows for daf-16 to translocate to the nucleus. In turn, association with daf-16 therefore allows for the transcriptional activation of daf-16 and regulation of longevity-related genes. Maintains lifespan by modulating daf-16 activity downstream of the daf-2 signaling pathway. Plays a role in heat and oxidative stress resistance. Role in stress resistance and also fat storage may be in association with the daf-2 signaling pathway. Required for normal feeding behavior. The sequence is that of Protein arginine N-methyltransferase 1 from Caenorhabditis elegans.